A 244-amino-acid polypeptide reads, in one-letter code: Osmotin-like protein OSM34 (244 aa).

An N-terminal signal peptide occupies residues 1-22; it reads MANLLVSTFIFSALLLISTATA. Cystine bridges form between cysteine 31–cysteine 222, cysteine 72–cysteine 82, cysteine 87–cysteine 93, cysteine 138–cysteine 212, cysteine 143–cysteine 195, cysteine 151–cysteine 161, cysteine 165–cysteine 174, and cysteine 175–cysteine 182.

This sequence belongs to the thaumatin family.

This is Osmotin-like protein OSM34 (OSM34) from Arabidopsis thaliana (Mouse-ear cress).